Here is a 534-residue protein sequence, read N- to C-terminus: MGGGGGEQQQLEVLHALDVAKTQWYHFTAIVVAGMGFFTDAYDLFCISLVTKLLGRIYYRVDGSPSPGTLPPHVSASVNGVAFVGTLSGQLFFGWLGDKLGRKRVYGITLMLMVLCSLASALSFGHTPTSVMATLCFFRFWLGFGIGGDYPLSATIMSEYANKKTRGAFIAAVFAMQGFGIITGGLVAILVSASFRAAFPAPPYGEDPVASTPPQADFVWRIILMLGALPAALTYYWRTKMPETARYTALVANNAKQAAADMSKVLQVVEMRNIGNNGGSRRPFGLFSGEFVRRHGLHLVGTSATWLLLDIAFYSQNLFQKDIFSAVGWIPKAATMSALEELFRIARAQTLIALCGTVPGYWFTVALIDVVGRFKIQAVGFFMMTLFMLTLALPYHHWTAPGKNHVGFLLLYGLTFFFANFGPNSTTFIVPAEIFPARLRATCHGISAASGKLGAIVGSFGFLYLAQSPDRSKTEHGYPPGIGVRNSLFLLAACNLLGLLFTFLVPESKGKSLEEMSGDAEAQEEAPPPLQTVL.

Residues 1–29 lie on the Cytoplasmic side of the membrane; the sequence is MGGGGGEQQQLEVLHALDVAKTQWYHFTA. Residues 30–50 traverse the membrane as a helical segment; the sequence is IVVAGMGFFTDAYDLFCISLV. Topologically, residues 51–75 are extracellular; the sequence is TKLLGRIYYRVDGSPSPGTLPPHVS. Residues 76–96 traverse the membrane as a helical segment; sequence ASVNGVAFVGTLSGQLFFGWL. Residues 97 to 104 are Cytoplasmic-facing; it reads GDKLGRKR. A helical membrane pass occupies residues 105-125; the sequence is VYGITLMLMVLCSLASALSFG. The Extracellular portion of the chain corresponds to 126 to 127; that stretch reads HT. The chain crosses the membrane as a helical span at residues 128–148; sequence PTSVMATLCFFRFWLGFGIGG. At 149 to 168 the chain is on the cytoplasmic side; that stretch reads DYPLSATIMSEYANKKTRGA. A helical transmembrane segment spans residues 169–189; sequence FIAAVFAMQGFGIITGGLVAI. Residues 190–216 lie on the Extracellular side of the membrane; it reads LVSASFRAAFPAPPYGEDPVASTPPQA. The chain crosses the membrane as a helical span at residues 217 to 237; that stretch reads DFVWRIILMLGALPAALTYYW. Over 238 to 294 the chain is Cytoplasmic; the sequence is RTKMPETARYTALVANNAKQAAADMSKVLQVVEMRNIGNNGGSRRPFGLFSGEFVRR. The helical transmembrane segment at 295–315 threads the bilayer; sequence HGLHLVGTSATWLLLDIAFYS. Residues 316–350 are Extracellular-facing; the sequence is QNLFQKDIFSAVGWIPKAATMSALEELFRIARAQT. Residues 351–371 form a helical membrane-spanning segment; it reads LIALCGTVPGYWFTVALIDVV. Residues 372 to 375 are Cytoplasmic-facing; that stretch reads GRFK. The chain crosses the membrane as a helical span at residues 376 to 396; the sequence is IQAVGFFMMTLFMLTLALPYH. Over 397–405 the chain is Extracellular; the sequence is HWTAPGKNH. The helical transmembrane segment at 406–426 threads the bilayer; it reads VGFLLLYGLTFFFANFGPNST. Topologically, residues 427–445 are cytoplasmic; the sequence is TFIVPAEIFPARLRATCHG. A helical membrane pass occupies residues 446-466; sequence ISAASGKLGAIVGSFGFLYLA. The Extracellular segment spans residues 467-486; it reads QSPDRSKTEHGYPPGIGVRN. The chain crosses the membrane as a helical span at residues 487 to 507; the sequence is SLFLLAACNLLGLLFTFLVPE. The Cytoplasmic portion of the chain corresponds to 508 to 534; the sequence is SKGKSLEEMSGDAEAQEEAPPPLQTVL. A disordered region spans residues 514–534; sequence EEMSGDAEAQEEAPPPLQTVL.

This sequence belongs to the major facilitator superfamily. Phosphate:H(+) symporter (TC 2.A.1.9) family. Highly expressed in leaves and at low levels in roots. Expressed in leaf xylem parenchyma cells.

It localises to the membrane. Functionally, high-affinity transporter for external inorganic phosphate (Pi). Probably involved in Pi uptake, translocation and internal transport throughout the plant. The sequence is that of Inorganic phosphate transporter 1-6 (PHT1-6) from Oryza sativa subsp. japonica (Rice).